Reading from the N-terminus, the 997-residue chain is Glutamate [NMDA] receptor subunit 1 (997 aa).

The first 26 residues, 1 to 26 (MAVAEFVFCWPLFELAIVLLVAPIHA), serve as a signal peptide directing secretion. At 27–573 (AQRHTASDNP…TLVSFLQPFS (547 aa)) the chain is on the extracellular side. N-linked (GlcNAc...) asparagine glycans are attached at residues Asn258, Asn314, Asn345, Asn397, Asn454, Asn481, and Asn501. Glycine-binding positions include 530–532 (PLT) and Arg537. Residues 574–594 (NTLWILVMVSVHVVALVLYLL) traverse the membrane as a helical segment. At 595-651 (DRFSPFGRFKLSHSDSNEEKALNLSSAVWFAWGVLLNSGIGEGTPRSFSARVLGMVW) the chain is on the cytoplasmic side. The helical transmembrane segment at 652–672 (AGFAMIIVASYTANLAAFLVL) threads the bilayer. Residues 673–831 (ERPKTKLSGI…KTPNTLGLKN (159 aa)) are Extracellular-facing. Asn693 is a glycosylation site (N-linked (GlcNAc...) asparagine). Residues Ser703 and Asp747 each coordinate glycine. Residues 832–852 (MAGVFILVGVGIAGGVGLIII) traverse the membrane as a helical segment. The Cytoplasmic segment spans residues 853–997 (EVIYKKHQVK…YTSDVSHLVV (145 aa)). The tract at residues 947 to 997 (ELGKPGQSPKVMSANQPGMPMPMLGKTRPQQSVLPPRYSPGYTSDVSHLVV) is disordered. A compositionally biased stretch (polar residues) spans 987–997 (GYTSDVSHLVV).

This sequence belongs to the glutamate-gated ion channel (TC 1.A.10.1) family. As to quaternary structure, forms a heteromeric NMDA channel with Nmdar2.

The protein resides in the cell membrane. The protein localises to the postsynaptic cell membrane. It is found in the postsynaptic density. Functionally, NMDA receptor subtype of glutamate-gated ion channels with high calcium permeability and voltage-dependent sensitivity to magnesium. Mediated by glycine. This protein plays a key role in synaptic plasticity, synaptogenesis, excitotoxicity, memory acquisition and learning. It mediates neuronal functions in glutamate neurotransmission. Is involved in the cell surface targeting of NMDA receptors. Plays a role in associative learning and in long-term memory consolidation. This is Glutamate [NMDA] receptor subunit 1 from Drosophila erecta (Fruit fly).